Consider the following 366-residue polypeptide: Dual-specificity RNA methyltransferase RlmN (366 aa).

Glu91 serves as the catalytic Proton acceptor. One can recognise a Radical SAM core domain in the interval 97–333 (EDDRGTLCVS…TTVRKTRGED (237 aa)). Cys104 and Cys338 form a disulfide bridge. Residues Cys111, Cys115, and Cys118 each coordinate [4Fe-4S] cluster. S-adenosyl-L-methionine contacts are provided by residues 164–165 (GE), Ser196, 218–220 (SLH), and Asn295. Catalysis depends on Cys338, which acts as the S-methylcysteine intermediate.

It belongs to the radical SAM superfamily. RlmN family. It depends on [4Fe-4S] cluster as a cofactor.

The protein localises to the cytoplasm. It catalyses the reaction adenosine(2503) in 23S rRNA + 2 reduced [2Fe-2S]-[ferredoxin] + 2 S-adenosyl-L-methionine = 2-methyladenosine(2503) in 23S rRNA + 5'-deoxyadenosine + L-methionine + 2 oxidized [2Fe-2S]-[ferredoxin] + S-adenosyl-L-homocysteine. The enzyme catalyses adenosine(37) in tRNA + 2 reduced [2Fe-2S]-[ferredoxin] + 2 S-adenosyl-L-methionine = 2-methyladenosine(37) in tRNA + 5'-deoxyadenosine + L-methionine + 2 oxidized [2Fe-2S]-[ferredoxin] + S-adenosyl-L-homocysteine. Its function is as follows. Specifically methylates position 2 of adenine 2503 in 23S rRNA and position 2 of adenine 37 in tRNAs. m2A2503 modification seems to play a crucial role in the proofreading step occurring at the peptidyl transferase center and thus would serve to optimize ribosomal fidelity. The sequence is that of Dual-specificity RNA methyltransferase RlmN from Laribacter hongkongensis (strain HLHK9).